The chain runs to 286 residues: Fructose-bisphosphate aldolase (286 aa).

Ser50 provides a ligand contact to D-glyceraldehyde 3-phosphate. Catalysis depends on Asp85, which acts as the Proton donor. Residues His86, Asp107, Glu137, and His181 each coordinate Zn(2+). Residue Gly182 coordinates dihydroxyacetone phosphate. His209 is a binding site for Zn(2+). Residues 210 to 212 and 231 to 234 each bind dihydroxyacetone phosphate; these read GGT and NVNT.

The protein belongs to the class II fructose-bisphosphate aldolase family. Requires Zn(2+) as cofactor.

The enzyme catalyses beta-D-fructose 1,6-bisphosphate = D-glyceraldehyde 3-phosphate + dihydroxyacetone phosphate. It functions in the pathway carbohydrate degradation; glycolysis; D-glyceraldehyde 3-phosphate and glycerone phosphate from D-glucose: step 4/4. Functionally, catalyzes the aldol condensation of dihydroxyacetone phosphate (DHAP or glycerone-phosphate) with glyceraldehyde 3-phosphate (G3P) to form fructose 1,6-bisphosphate (FBP) in gluconeogenesis and the reverse reaction in glycolysis. This chain is Fructose-bisphosphate aldolase (fba), found in Staphylococcus epidermidis (strain ATCC 35984 / DSM 28319 / BCRC 17069 / CCUG 31568 / BM 3577 / RP62A).